A 229-amino-acid polypeptide reads, in one-letter code: Flagellar L-ring protein (229 aa).

The first 20 residues, 1–20 (MLKTVLRLPVCAALLALAAG), serve as a signal peptide directing secretion. Residue Cys-21 is the site of N-palmitoyl cysteine attachment. A lipid anchor (S-diacylglycerol cysteine) is attached at Cys-21.

Belongs to the FlgH family. As to quaternary structure, the basal body constitutes a major portion of the flagellar organelle and consists of four rings (L,P,S, and M) mounted on a central rod.

The protein localises to the cell outer membrane. It is found in the bacterial flagellum basal body. In terms of biological role, assembles around the rod to form the L-ring and probably protects the motor/basal body from shearing forces during rotation. The protein is Flagellar L-ring protein of Bordetella pertussis (strain Tohama I / ATCC BAA-589 / NCTC 13251).